We begin with the raw amino-acid sequence, 381 residues long: Cobalt-precorrin-5B C(1)-methyltransferase (381 aa).

It belongs to the CbiD family.

The catalysed reaction is Co-precorrin-5B + S-adenosyl-L-methionine = Co-precorrin-6A + S-adenosyl-L-homocysteine. Its pathway is cofactor biosynthesis; adenosylcobalamin biosynthesis; cob(II)yrinate a,c-diamide from sirohydrochlorin (anaerobic route): step 6/10. Catalyzes the methylation of C-1 in cobalt-precorrin-5B to form cobalt-precorrin-6A. This is Cobalt-precorrin-5B C(1)-methyltransferase from Clostridium botulinum (strain Eklund 17B / Type B).